A 262-amino-acid chain; its full sequence is Taurine import ATP-binding protein TauB (262 aa).

The region spanning 4–233 (LELERISAQY…RYAAGESARA (230 aa)) is the ABC transporter domain. 38-45 (GPSGSGKT) lines the ATP pocket.

It belongs to the ABC transporter superfamily. Taurine importer (TC 3.A.1.17.1) family. In terms of assembly, the complex is composed of two ATP-binding proteins (TauB), two transmembrane proteins (TauC) and a solute-binding protein (TauA).

It localises to the cell inner membrane. The catalysed reaction is taurine(out) + ATP + H2O = taurine(in) + ADP + phosphate + H(+). Its function is as follows. Part of the ABC transporter complex TauABC involved in taurine import. Responsible for energy coupling to the transport system. This chain is Taurine import ATP-binding protein TauB, found in Pseudomonas putida (strain ATCC 47054 / DSM 6125 / CFBP 8728 / NCIMB 11950 / KT2440).